We begin with the raw amino-acid sequence, 197 residues long: Large ribosomal subunit protein bL9 (197 aa).

Positions 178–197 are disordered; sequence GEFFDPEAQEDEAAAGETAQ. Over residues 181-191 the composition is skewed to acidic residues; that stretch reads FDPEAQEDEAA.

The protein belongs to the bacterial ribosomal protein bL9 family.

In terms of biological role, binds to the 23S rRNA. The protein is Large ribosomal subunit protein bL9 of Bradyrhizobium sp. (strain BTAi1 / ATCC BAA-1182).